The following is a 92-amino-acid chain: C-C motif chemokine 4 (92 aa).

The first 23 residues, 1–23, serve as a signal peptide directing secretion; sequence MKLGVTVLSVALLVAALCPPALS. Intrachain disulfides connect C34/C58 and C35/C74.

It belongs to the intercrine beta (chemokine CC) family. In terms of assembly, homodimer.

It is found in the secreted. Monokine with inflammatory and chemokinetic properties. This chain is C-C motif chemokine 4 (CCL4), found in Oryctolagus cuniculus (Rabbit).